A 251-amino-acid chain; its full sequence is ATP synthase subunit a (251 aa).

The next 5 membrane-spanning stretches (helical) occupy residues 34–54 (VFLTSWFVIGVLVLASVAASS), 93–113 (FVGTLFLFIFVSNWSGALVPF), 130–150 (INTTVALALLTSLAYFYAGFS), 195–215 (LVVGVLVLLVPLFVPLPVMAL), and 216–236 (GLFTSAIQALIFATLAAAYIG).

The protein belongs to the ATPase A chain family. F-type ATPases have 2 components, CF(1) - the catalytic core - and CF(0) - the membrane proton channel. CF(1) has five subunits: alpha(3), beta(3), gamma(1), delta(1), epsilon(1). CF(0) has four main subunits: a, b, b' and c.

It localises to the cellular thylakoid membrane. Functionally, key component of the proton channel; it plays a direct role in the translocation of protons across the membrane. In Nostoc sp. (strain PCC 7120 / SAG 25.82 / UTEX 2576), this protein is ATP synthase subunit a.